A 475-amino-acid polypeptide reads, in one-letter code: Probable pectate lyase 7 (475 aa).

The N-terminal stretch at 1–24 is a signal peptide; sequence METARLFKLVCVICIASLIPTIRA. N-linked (GlcNAc...) asparagine glycosylation is found at asparagine 67 and asparagine 96. The disordered stretch occupies residues 91-117; it reads ISSPTNSTRRSLTGRGKGKGKGKWSKL. Aspartate 271, aspartate 295, and aspartate 299 together coordinate Ca(2+). Arginine 351 is an active-site residue.

Belongs to the polysaccharide lyase 1 family. Ca(2+) serves as cofactor.

The catalysed reaction is Eliminative cleavage of (1-&gt;4)-alpha-D-galacturonan to give oligosaccharides with 4-deoxy-alpha-D-galact-4-enuronosyl groups at their non-reducing ends.. Its pathway is glycan metabolism; pectin degradation; 2-dehydro-3-deoxy-D-gluconate from pectin: step 2/5. The protein is Probable pectate lyase 7 of Arabidopsis thaliana (Mouse-ear cress).